We begin with the raw amino-acid sequence, 37 residues long: Cytochrome b6-f complex subunit 5 (37 aa).

The helical transmembrane segment at 5–25 (LLFGIVLGLIPVTLTGLFVAA) threads the bilayer.

It belongs to the PetG family. The 4 large subunits of the cytochrome b6-f complex are cytochrome b6, subunit IV (17 kDa polypeptide, PetD), cytochrome f and the Rieske protein, while the 4 small subunits are PetG, PetL, PetM and PetN. The complex functions as a dimer.

Its subcellular location is the plastid. The protein resides in the chloroplast thylakoid membrane. In terms of biological role, component of the cytochrome b6-f complex, which mediates electron transfer between photosystem II (PSII) and photosystem I (PSI), cyclic electron flow around PSI, and state transitions. PetG is required for either the stability or assembly of the cytochrome b6-f complex. The polypeptide is Cytochrome b6-f complex subunit 5 (Guillardia theta (Cryptophyte)).